Consider the following 212-residue polypeptide: ATP-dependent Clp protease proteolytic subunit (212 aa).

Catalysis depends on serine 114, which acts as the Nucleophile. Histidine 139 is an active-site residue.

Belongs to the peptidase S14 family. As to quaternary structure, fourteen ClpP subunits assemble into 2 heptameric rings which stack back to back to give a disk-like structure with a central cavity, resembling the structure of eukaryotic proteasomes.

The protein localises to the cytoplasm. It catalyses the reaction Hydrolysis of proteins to small peptides in the presence of ATP and magnesium. alpha-casein is the usual test substrate. In the absence of ATP, only oligopeptides shorter than five residues are hydrolyzed (such as succinyl-Leu-Tyr-|-NHMec, and Leu-Tyr-Leu-|-Tyr-Trp, in which cleavage of the -Tyr-|-Leu- and -Tyr-|-Trp bonds also occurs).. Its function is as follows. Cleaves peptides in various proteins in a process that requires ATP hydrolysis. Has a chymotrypsin-like activity. Plays a major role in the degradation of misfolded proteins. The protein is ATP-dependent Clp protease proteolytic subunit of Laribacter hongkongensis (strain HLHK9).